A 1437-amino-acid polypeptide reads, in one-letter code: FYVE and coiled-coil domain-containing protein 1 (1437 aa).

Ala-2 is modified (N-acetylalanine). Residues 4–30 are a coiled coil; sequence SSTETQLQRIIRDLQDAATELSHEFKE. The region spanning 36–169 is the RUN domain; sequence TDDSTSLHKF…VQFDLAPRGY (134 aa). Position 196 is a phosphoserine (Ser-196). Coiled-coil stretches lie at residues 223-270, 305-846, and 873-1110; these read SLNN…VSRQ, SQAT…SEGA, and ALTA…KDAL. Thr-372 carries the phosphothreonine modification. Position 837 is a phosphoserine (Ser-837). The segment at 1132 to 1190 adopts an FYVE-type zinc-finger fold; it reads DMEVNHCHDCKREFSWIVRRHHCRICGRIFCYYCCNNYVVTKPSGKKERCCRACFQKFG. Residues Cys-1138, Cys-1141, Cys-1154, Cys-1157, Cys-1162, Cys-1165, Cys-1182, and Cys-1185 each contribute to the Zn(2+) site. Disordered stretches follow at residues 1191 to 1227 and 1253 to 1289; these read EGSG…SQGI and SGSS…TEDV. Low complexity predominate over residues 1194 to 1206; the sequence is GSNDSSGSGTSQG. 2 stretches are compositionally biased toward polar residues: residues 1218–1227 and 1253–1283; these read SPQSIGSQGI and SGSS…SLTP. A GOLD domain is found at 1296-1425; sequence EICLLKSGEL…SKKVLYHLTV (130 aa).

As to quaternary structure, can form homodimers. Interacts (via C-terminus) with MAP1LC3B. Interacts with RAB7A; the interaction with RAB7A induces FYCO1 recruitment to late endosomal/lysosomal compartments. In terms of tissue distribution, expressed in heart and testis. Expressed in the eye lens.

It is found in the cytoplasmic vesicle. The protein localises to the autophagosome. It localises to the endosome. The protein resides in the lysosome. Functionally, may mediate microtubule plus end-directed vesicle transport. The polypeptide is FYVE and coiled-coil domain-containing protein 1 (Fyco1) (Mus musculus (Mouse)).